The sequence spans 616 residues: Probable galacturonosyltransferase 4 (616 aa).

The Cytoplasmic portion of the chain corresponds to 1 to 6 (MMVKLR). Residues 7–29 (NLVLFFMLLTVVAHILLYTDPAA) traverse the membrane as a helical; Signal-anchor for type II membrane protein segment. Topologically, residues 30 to 616 (SFKTPFSKRD…VYLRECNINP (587 aa)) are lumenal. Residues 132-152 (QTSEKVDEQPEPNAFGAKKDT) form a disordered region. Residues N291, N326, N378, N481, and N514 are each glycosylated (N-linked (GlcNAc...) asparagine).

It belongs to the glycosyltransferase 8 family. In terms of tissue distribution, expressed in roots, inflorescences, siliques, leaves and stems.

The protein localises to the golgi apparatus membrane. It functions in the pathway glycan metabolism; pectin biosynthesis. Its function is as follows. May be involved in pectin and/or xylans biosynthesis in cell walls. The polypeptide is Probable galacturonosyltransferase 4 (GAUT4) (Arabidopsis thaliana (Mouse-ear cress)).